The primary structure comprises 106 residues: Probable glutaredoxin (106 aa).

In terms of domain architecture, Glutaredoxin spans 8 to 106 (IVQKITGADP…AKYLDVQFTQ (99 aa)). C28 and C31 are oxidised to a cystine.

This sequence belongs to the glutaredoxin family.

It is found in the virion. The polypeptide is Probable glutaredoxin (Acanthamoeba polyphaga mimivirus (APMV)).